The following is a 317-amino-acid chain: Protein-methionine-sulfoxide reductase catalytic subunit MsrP (317 aa).

Positions 1–40 (MNKFTKTDVTPEKLFIQRRKIIQGMSVLSAAAAFPNLAAA) form a signal peptide, tat-type signal. Mo-molybdopterin is bound by residues N72, 75–76 (YE), C129, T164, N216, R221, and 232–234 (SIK).

It belongs to the MsrP family. Heterodimer of a catalytic subunit (MsrP) and a heme-binding subunit (MsrQ). The cofactor is Mo-molybdopterin. In terms of processing, predicted to be exported by the Tat system. The position of the signal peptide cleavage has not been experimentally proven.

It localises to the periplasm. It carries out the reaction L-methionyl-[protein] + a quinone + H2O = L-methionyl-(S)-S-oxide-[protein] + a quinol. The catalysed reaction is L-methionyl-[protein] + a quinone + H2O = L-methionyl-(R)-S-oxide-[protein] + a quinol. Part of the MsrPQ system that repairs oxidized periplasmic proteins containing methionine sulfoxide residues (Met-O), using respiratory chain electrons. Thus protects these proteins from oxidative-stress damage caused by reactive species of oxygen and chlorine generated by the host defense mechanisms. MsrPQ is essential for the maintenance of envelope integrity under bleach stress, rescuing a wide series of structurally unrelated periplasmic proteins from methionine oxidation. The catalytic subunit MsrP is non-stereospecific, being able to reduce both (R-) and (S-) diastereoisomers of methionine sulfoxide. The sequence is that of Protein-methionine-sulfoxide reductase catalytic subunit MsrP from Actinobacillus succinogenes (strain ATCC 55618 / DSM 22257 / CCUG 43843 / 130Z).